The sequence spans 161 residues: Arachidonate 5-lipoxygenase-activating protein (161 aa).

The Lumenal segment spans residues 1-8 (MDQETVGN). A helical transmembrane segment spans residues 9–30 (VVLLAIVTLISVVQNGFFAHKV). Residues 31–52 (EHESRTQNGRSFQRTGTLAFER) are Cytoplasmic-facing. The chain crosses the membrane as a helical span at residues 53 to 77 (VYTANQNCVDAYPTFLAVLWSAGLL). Residues 78–80 (CSQ) lie on the Lumenal side of the membrane. A helical transmembrane segment spans residues 81–102 (VPAAFAGLMYLLVRQKYFVGYL). At 103–107 (GERTQ) the chain is on the cytoplasmic side. An intramembrane segment occupies 108–115 (STPGYIFG). A helical membrane pass occupies residues 116-128 (KRIILFLFLMSVA). Over 129–161 (GIFNYYLIFFFGSDFENYIKTVTTTISPLLLIP) the chain is Lumenal.

This sequence belongs to the MAPEG family. As to quaternary structure, homotrimer. Interacts with LTC4S and ALOX5.

The protein localises to the nucleus membrane. It is found in the endoplasmic reticulum membrane. Required for leukotriene biosynthesis by ALOX5 (5-lipoxygenase). Anchors ALOX5 to the membrane. Binds arachidonic acid, and could play an essential role in the transfer of arachidonic acid to ALOX5. Binds to MK-886, a compound that blocks the biosynthesis of leukotrienes. The protein is Arachidonate 5-lipoxygenase-activating protein (ALOX5AP) of Macaca fascicularis (Crab-eating macaque).